Consider the following 510-residue polypeptide: Beta-glucosidase 26 (510 aa).

The signal sequence occupies residues 1 to 27; it reads MRKFIAALRLALAAAAHLLLTLPPAQC. Gln59 is an a beta-D-glucoside binding site. 2 N-linked (GlcNAc...) asparagine glycosylation sites follow: Asn87 and Asn127. A beta-D-glucoside is bound by residues His160 and 205-206; that span reads NE. Catalysis depends on Glu206, which acts as the Proton donor. Cys225 and Cys228 are disulfide-bonded. Asn233 carries N-linked (GlcNAc...) asparagine glycosylation. A beta-D-glucoside is bound by residues Tyr345 and Glu416. Glu416 functions as the Nucleophile in the catalytic mechanism. N-linked (GlcNAc...) asparagine glycosylation occurs at Asn424. Residues Trp463, 470–471, and Phe479 contribute to the a beta-D-glucoside site; that span reads EW.

The protein belongs to the glycosyl hydrolase 1 family.

It carries out the reaction Hydrolysis of terminal, non-reducing beta-D-glucosyl residues with release of beta-D-glucose.. In terms of biological role, hydrolyzes p-nitrophenyl beta-D-glucoside, p-nitrophenyl beta-D-mannoside, p-nitrophenyl beta-D-galactoside, p-nitrophenyl beta-D-xyloside, p-nitrophenyl beta-D-fucoside, p-nitrophenyl beta-L-arabinoside, cello-oligosaccharides, laminari-oligosaccharides and sophorose. The polypeptide is Beta-glucosidase 26 (BGLU26) (Oryza sativa subsp. japonica (Rice)).